A 587-amino-acid chain; its full sequence is Inorganic phosphate transporter 2-1, chloroplastic (587 aa).

The N-terminal 71 residues, 1 to 71 (MTLPYRFSSV…VCPLASFSSY (71 aa)), are a transit peptide targeting the chloroplast. A disordered region spans residues 74–106 (SEGEEQHHADQPIQNPHESSTVSNESDGKGNAE). Residues 85-98 (PIQNPHESSTVSNE) show a composition bias toward polar residues. 12 consecutive transmembrane segments (helical) span residues 127-147 (AISI…KSLG), 154-174 (TKLL…NIGA), 195-215 (AVMT…THVT), 233-253 (MLLF…LQVA), 265-285 (CIVG…AVFW), 289-309 (AKVA…SFLV), 327-347 (AAAA…SAAL), 352-372 (IFPI…IVFD), 413-433 (LEIV…FMSF), 465-485 (IVIP…GLTM), 523-543 (LGLP…VGFA), and 559-579 (ASWL…TWIF).

The protein belongs to the inorganic phosphate transporter (PiT) (TC 2.A.20.2) family. Mostly expressed in young green tissues. Present in both auto- and heterotrophic tissues. Also expressed in root stele.

It localises to the plastid. It is found in the chloroplast inner membrane. Functionally, low affinity H(+)/Pi chloroplastic cotransporter. Involved in inorganic phosphate (orthophosphate, Pi) uptake in green parts of plants in Pi-sufficient conditions. Required for Pi retranslocation during Pi deprivation. This Arabidopsis thaliana (Mouse-ear cress) protein is Inorganic phosphate transporter 2-1, chloroplastic (PHT2-1).